We begin with the raw amino-acid sequence, 478 residues long: Adenosylhomocysteinase (478 aa).

3 residues coordinate substrate: T57, D139, and E201. 202-204 (TTT) contributes to the NAD(+) binding site. Substrate-binding residues include K231 and D235. Residues N236, 265–270 (GYGDVG), E288, N323, 344–346 (IGH), and N392 each bind NAD(+).

Belongs to the adenosylhomocysteinase family. Requires NAD(+) as cofactor.

Its subcellular location is the cytoplasm. It carries out the reaction S-adenosyl-L-homocysteine + H2O = L-homocysteine + adenosine. Its pathway is amino-acid biosynthesis; L-homocysteine biosynthesis; L-homocysteine from S-adenosyl-L-homocysteine: step 1/1. Its function is as follows. May play a key role in the regulation of the intracellular concentration of adenosylhomocysteine. In Corynebacterium efficiens (strain DSM 44549 / YS-314 / AJ 12310 / JCM 11189 / NBRC 100395), this protein is Adenosylhomocysteinase.